The following is a 102-amino-acid chain: Secreted RxLR effector protein 61 (102 aa).

A signal peptide spans 1–22 (MAFQLRIVQHLLHITFLRLPLA). Residues 51 to 60 (RRLRQLNEHR) carry the RxLR-dEER motif.

The protein belongs to the RxLR effector family.

The protein localises to the secreted. The protein resides in the host chloroplast envelope. It localises to the host cytoplasm. It is found in the host nucleus. In terms of biological role, effector that partially suppresses the tobacco programmed cell death induced by cell death-inducing proteins. This is Secreted RxLR effector protein 61 from Plasmopara viticola (Downy mildew of grapevine).